Consider the following 500-residue polypeptide: Vitamin D(3) 25-hydroxylase (500 aa).

Cysteine 446 is a binding site for heme.

This sequence belongs to the cytochrome P450 family. Heme is required as a cofactor. In terms of tissue distribution, found in liver and kidney.

Its subcellular location is the endoplasmic reticulum membrane. It localises to the microsome membrane. The catalysed reaction is calciol + reduced [NADPH--hemoprotein reductase] + O2 = calcidiol + oxidized [NADPH--hemoprotein reductase] + H2O + H(+). The enzyme catalyses alfacalcidol + reduced [NADPH--hemoprotein reductase] + O2 = calcitriol + oxidized [NADPH--hemoprotein reductase] + H2O + H(+). It carries out the reaction dodecanoate + reduced [NADPH--hemoprotein reductase] + O2 = 12-hydroxydodecanoate + oxidized [NADPH--hemoprotein reductase] + H2O + H(+). It catalyses the reaction dodecanoate + reduced [NADPH--hemoprotein reductase] + O2 = 11-hydroxydodecanoate + oxidized [NADPH--hemoprotein reductase] + H2O + H(+). The catalysed reaction is 5beta-cholestane-3alpha,7alpha-diol + reduced [NADPH--hemoprotein reductase] + O2 = 5beta-cholestane-3alpha,7alpha,25-triol + oxidized [NADPH--hemoprotein reductase] + H2O + H(+). The enzyme catalyses 5beta-cholestane-3alpha,7alpha,12alpha-triol + reduced [NADPH--hemoprotein reductase] + O2 = 5beta-cholestane-3alpha,7alpha,12alpha,25-tetrol + oxidized [NADPH--hemoprotein reductase] + H2O + H(+). Catalyzes the 25-hydroxylation of vitamin D(3) (calciol), 1alpha-hydroxyvitamin D(3) (alphacalcidiol) and some C27 steroids. In addition the enzyme catalyzes the hydroxylation of positions 11 and 12 of dodecanoate. The polypeptide is Vitamin D(3) 25-hydroxylase (CYP2D25) (Sus scrofa (Pig)).